The chain runs to 435 residues: Adenylosuccinate synthetase (435 aa).

GTP contacts are provided by residues 13–19 and 41–43; these read GDEGKGK and GHT. Aspartate 14 acts as the Proton acceptor in catalysis. Positions 14 and 41 each coordinate Mg(2+). IMP contacts are provided by residues 14-17, 39-42, threonine 130, arginine 144, glutamine 225, threonine 240, and arginine 304; these read DEGK and NAGH. Histidine 42 serves as the catalytic Proton donor. 300–306 contributes to the substrate binding site; the sequence is ATTGRPR. GTP is bound by residues arginine 306, 332–334, and 419–421; these read KLD and STG.

This sequence belongs to the adenylosuccinate synthetase family. In terms of assembly, homodimer. The cofactor is Mg(2+).

It is found in the cytoplasm. The catalysed reaction is IMP + L-aspartate + GTP = N(6)-(1,2-dicarboxyethyl)-AMP + GDP + phosphate + 2 H(+). The protein operates within purine metabolism; AMP biosynthesis via de novo pathway; AMP from IMP: step 1/2. Plays an important role in the de novo pathway of purine nucleotide biosynthesis. Catalyzes the first committed step in the biosynthesis of AMP from IMP. The chain is Adenylosuccinate synthetase from Nitrosospira multiformis (strain ATCC 25196 / NCIMB 11849 / C 71).